The primary structure comprises 135 residues: Large ribosomal subunit protein uL16c (135 aa).

Belongs to the universal ribosomal protein uL16 family. As to quaternary structure, part of the 50S ribosomal subunit.

The protein localises to the plastid. It is found in the chloroplast. This Eucalyptus globulus subsp. globulus (Tasmanian blue gum) protein is Large ribosomal subunit protein uL16c.